Consider the following 389-residue polypeptide: S-adenosylmethionine synthase (389 aa).

Position 15 (His15) interacts with ATP. Mg(2+) is bound at residue Asp17. A K(+)-binding site is contributed by Glu43. The L-methionine site is built by Glu56 and Gln99. A flexible loop region spans residues 99–109 (QSPDIAQGVNE). ATP contacts are provided by residues 166–168 (DAK), 234–235 (RF), Asp243, 249–250 (RK), Ala266, and Lys270. Position 243 (Asp243) interacts with L-methionine. Lys274 serves as a coordination point for L-methionine.

The protein belongs to the AdoMet synthase family. Homotetramer; dimer of dimers. Mg(2+) serves as cofactor. Requires K(+) as cofactor.

Its subcellular location is the cytoplasm. The enzyme catalyses L-methionine + ATP + H2O = S-adenosyl-L-methionine + phosphate + diphosphate. It participates in amino-acid biosynthesis; S-adenosyl-L-methionine biosynthesis; S-adenosyl-L-methionine from L-methionine: step 1/1. Functionally, catalyzes the formation of S-adenosylmethionine (AdoMet) from methionine and ATP. The overall synthetic reaction is composed of two sequential steps, AdoMet formation and the subsequent tripolyphosphate hydrolysis which occurs prior to release of AdoMet from the enzyme. In Neisseria meningitidis serogroup C / serotype 2a (strain ATCC 700532 / DSM 15464 / FAM18), this protein is S-adenosylmethionine synthase.